Here is a 213-residue protein sequence, read N- to C-terminus: Kynurenine formamidase (213 aa).

Tryptophan 15 contributes to the substrate binding site. Zn(2+) contacts are provided by histidine 45, histidine 49, and aspartate 51. Histidine 55 functions as the Proton donor/acceptor in the catalytic mechanism. Zn(2+) is bound by residues histidine 157 and glutamate 169.

This sequence belongs to the Cyclase 1 superfamily. KynB family. Homodimer. Zn(2+) serves as cofactor.

It carries out the reaction N-formyl-L-kynurenine + H2O = L-kynurenine + formate + H(+). It functions in the pathway amino-acid degradation; L-tryptophan degradation via kynurenine pathway; L-kynurenine from L-tryptophan: step 2/2. Functionally, catalyzes the hydrolysis of N-formyl-L-kynurenine to L-kynurenine, the second step in the kynurenine pathway of tryptophan degradation. The polypeptide is Kynurenine formamidase (Deinococcus geothermalis (strain DSM 11300 / CIP 105573 / AG-3a)).